Here is a 116-residue protein sequence, read N- to C-terminus: Putative pterin-4-alpha-carbinolamine dehydratase 1 (116 aa).

Belongs to the pterin-4-alpha-carbinolamine dehydratase family.

The enzyme catalyses (4aS,6R)-4a-hydroxy-L-erythro-5,6,7,8-tetrahydrobiopterin = (6R)-L-erythro-6,7-dihydrobiopterin + H2O. In Gloeobacter violaceus (strain ATCC 29082 / PCC 7421), this protein is Putative pterin-4-alpha-carbinolamine dehydratase 1.